Consider the following 148-residue polypeptide: UPF0179 protein Mpal_0949 (148 aa).

This sequence belongs to the UPF0179 family.

The chain is UPF0179 protein Mpal_0949 from Methanosphaerula palustris (strain ATCC BAA-1556 / DSM 19958 / E1-9c).